The chain runs to 1435 residues: Probable ATP-dependent DNA helicase HFM1 (1435 aa).

Residues 290-478 (DDLLYTDRNF…WLSDGERPAV (189 aa)) enclose the Helicase ATP-binding domain. Residue 303-310 (APTGSGKT) participates in ATP binding. A DEAH box motif is present at residues 411-414 (DEVH). The 202-residue stretch at 519–720 (SVIQMYSDQK…DVNIAVEWIR (202 aa)) folds into the Helicase C-terminal domain. Residues 777–1092 (PTEAGRLMAW…GLDIQQKLTV (316 aa)) enclose the SEC63 domain. The segment at 1109-1139 (KSETQISHSKHSDISTIAGPNKGTTASKKPG) is disordered. The segment at 1143 to 1158 (CNHLCKSKHTCGHDCC) adopts a C4-type zinc-finger fold. The disordered stretch occupies residues 1295 to 1315 (GFGNTLSSSTRGSKLPLQESK). Polar residues predominate over residues 1296-1306 (FGNTLSSSTRG).

It belongs to the helicase family. SKI2 subfamily. It depends on Zn(2+) as a cofactor. Preferentially expressed in testis and ovary.

The enzyme catalyses Couples ATP hydrolysis with the unwinding of duplex DNA by translocating in the 3'-5' direction.. It catalyses the reaction ATP + H2O = ADP + phosphate + H(+). Functionally, required for crossover formation and complete synapsis of homologous chromosomes during meiosis. This Homo sapiens (Human) protein is Probable ATP-dependent DNA helicase HFM1 (HFM1).